The chain runs to 222 residues: UPF0758 protein YicR (222 aa).

One can recognise an MPN domain in the interval 100-222 (PLLSPEMTRE…YVSFAERGWI (123 aa)). Zn(2+) contacts are provided by His171, His173, and Asp184. The JAMM motif signature appears at 171–184 (HNHPSGCAEPSKAD).

The protein belongs to the UPF0758 family. YicR subfamily.

This Escherichia coli O81 (strain ED1a) protein is UPF0758 protein YicR.